A 299-amino-acid chain; its full sequence is GTPase Era (299 aa).

The Era-type G domain maps to 4-171 (KSGFVAILGR…VDILSENLEE (168 aa)). Residues 12 to 19 (GRPNVGKS) form a G1 region. GTP is bound at residue 12 to 19 (GRPNVGKS). Positions 38-42 (QTTRN) are G2. A G3 region spans residues 59-62 (DTPG). Residues 59–63 (DTPGI) and 121–124 (NKID) each bind GTP. The G4 stretch occupies residues 121–124 (NKID). Residues 150–152 (ISA) are G5. In terms of domain architecture, KH type-2 spans 202–280 (TREEIPHSVA…FLETWVKVKK (79 aa)).

It belongs to the TRAFAC class TrmE-Era-EngA-EngB-Septin-like GTPase superfamily. Era GTPase family. Monomer.

It localises to the cytoplasm. The protein resides in the cell membrane. Functionally, an essential GTPase that binds both GDP and GTP, with rapid nucleotide exchange. Plays a role in 16S rRNA processing and 30S ribosomal subunit biogenesis and possibly also in cell cycle regulation and energy metabolism. This is GTPase Era from Streptococcus gordonii (strain Challis / ATCC 35105 / BCRC 15272 / CH1 / DL1 / V288).